A 456-amino-acid chain; its full sequence is Protein disulfide-isomerase TMX3 (456 aa).

A signal peptide spans 1 to 29 (MANAVGRRSWAALRLCAAVILLDLAVCKG). A Thioredoxin domain is found at 30–131 (FVEDLNESFK…KDDIIEFAHR (102 aa)). Topologically, residues 30-378 (FVEDLNESFK…TIVSIFKSSP (349 aa)) are lumenal. N35 is a glycosylation site (N-linked (GlcNAc...) asparagine). Active-site nucleophile residues include C56 and C59. Residues C56 and C59 are joined by a disulfide bond. N-linked (GlcNAc...) asparagine glycosylation is found at N261 and N316. The helical transmembrane segment at 379–399 (LMGCFLFGLPLGVISIMCYGI) threads the bilayer. The Cytoplasmic segment spans residues 400–456 (YTADTDGGYIEERYEVSKSEMENQEQIEESKEQESSSGGSLAPTVQEPKDVLEKKKD). The segment at 416-456 (SKSEMENQEQIEESKEQESSSGGSLAPTVQEPKDVLEKKKD) is disordered. The segment covering 446–456 (EPKDVLEKKKD) has biased composition (basic and acidic residues). Residues 453–456 (KKKD) carry the Di-lysine motif motif.

The protein belongs to the protein disulfide isomerase family.

The protein resides in the endoplasmic reticulum membrane. The catalysed reaction is Catalyzes the rearrangement of -S-S- bonds in proteins.. Its function is as follows. Probable disulfide isomerase, which participates in the folding of proteins containing disulfide bonds. May act as a dithiol oxidase. Acts as a regulator of endoplasmic reticulum-mitochondria contact sites via its ability to regulate redox signals. This chain is Protein disulfide-isomerase TMX3 (Tmx3), found in Mus musculus (Mouse).